A 413-amino-acid polypeptide reads, in one-letter code: Histidine--tRNA ligase (413 aa).

This sequence belongs to the class-II aminoacyl-tRNA synthetase family. In terms of assembly, homodimer.

It localises to the cytoplasm. It carries out the reaction tRNA(His) + L-histidine + ATP = L-histidyl-tRNA(His) + AMP + diphosphate + H(+). This is Histidine--tRNA ligase from Neorickettsia sennetsu (strain ATCC VR-367 / Miyayama) (Ehrlichia sennetsu).